The following is a 434-amino-acid chain: UDP-N-acetylglucosamine 1-carboxyvinyltransferase (434 aa).

Lys22–Asn23 contributes to the phosphoenolpyruvate binding site. Residue Arg99 participates in UDP-N-acetyl-alpha-D-glucosamine binding. Cys123 acts as the Proton donor in catalysis. Cys123 bears the 2-(S-cysteinyl)pyruvic acid O-phosphothioketal mark. UDP-N-acetyl-alpha-D-glucosamine-binding positions include Arg128–Gln132, Asp317, and Ile339.

This sequence belongs to the EPSP synthase family. MurA subfamily.

Its subcellular location is the cytoplasm. It carries out the reaction phosphoenolpyruvate + UDP-N-acetyl-alpha-D-glucosamine = UDP-N-acetyl-3-O-(1-carboxyvinyl)-alpha-D-glucosamine + phosphate. Its pathway is cell wall biogenesis; peptidoglycan biosynthesis. Functionally, cell wall formation. Adds enolpyruvyl to UDP-N-acetylglucosamine. The protein is UDP-N-acetylglucosamine 1-carboxyvinyltransferase of Paracidovorax citrulli (strain AAC00-1) (Acidovorax citrulli).